We begin with the raw amino-acid sequence, 554 residues long: MVSAKKVPAIALSAGVSFALLRFLCLAVCLNESPGQNQKEEKLCTENFTRILDSLLDGYDNRLRPGFGGPVTEVKTDIYVTSFGPVSDVEMEYTMDVFFRQTWIDKRLKYDGPIEILRLNNMMVTKVWTPDTFFRNGKKSVSHNMTAPNKLFRIMRNGTILYTMRLTISAECPMRLVDFPMDGHACPLKFGSYAYPKSEMIYTWTKGPEKSVEVPKESSSLVQYDLIGQTVSSETIKSITGEYIVMTVYFHLRRKMGYFMIQTYIPCIMTVILSQVSFWINKESVPARTVFGITTVLTMTTLSISARHSLPKVSYATAMDWFIAVCFAFVFSALIEFAAVNYFTNIQMEKAKRKTSKPPQEVPAAPVQREKHPEAPLQNTNANLNMRKRTNALVHSESDVGNRTEVGNHSSKSSTVVQESSKGTPRSYLASSPNPFSRANAAETISAARALPSASPTSIRTGYMPRKASVGSASTRHVFGSRLQRIKTTVNTIGATGKLSATPPPSAPPPSGSGTSKIDKYARILFPVTFGAFNMVYWVVYLSKDTMEKSESLM.

The signal sequence occupies residues M1 to G35. Over Q36–F259 the chain is Extracellular. An N-linked (GlcNAc...) asparagine glycan is attached at N47. Residue R100 participates in 4-aminobutanoate binding. N-linked (GlcNAc...) asparagine glycosylation is found at N144 and N157. T163 lines the 4-aminobutanoate pocket. A disulfide bridge links C172 with C186. Residues M260–I280 traverse the membrane as a helical segment. The Cytoplasmic segment spans residues N281–S284. A helical transmembrane segment spans residues V285–S305. The Extracellular segment spans residues A306 to A318. Residues M319–N341 traverse the membrane as a helical segment. At Y342–K517 the chain is on the cytoplasmic side. Disordered stretches follow at residues K350–N381, E397–P435, P452–G471, and A495–T515. Residues S410 to K422 are compositionally biased toward low complexity. Positions T502–S511 are enriched in pro residues. A helical transmembrane segment spans residues I518 to V540. Topologically, residues Y541–M554 are extracellular.

Belongs to the ligand-gated ion channel (TC 1.A.9) family. Gamma-aminobutyric acid receptor (TC 1.A.9.5) subfamily. GABRA4 sub-subfamily. As to quaternary structure, heteropentamer, formed by a combination of alpha (GABRA1-6), beta (GABRB1-3), gamma (GABRG1-3), delta (GABRD), epsilon (GABRE), rho (GABRR1-3), pi (GABRP) and theta (GABRQ) chains, each subunit exhibiting distinct physiological and pharmacological properties. Expressed in the brain.

It localises to the cell membrane. The protein resides in the postsynaptic cell membrane. It carries out the reaction chloride(in) = chloride(out). With respect to regulation, potentiated by histamine. Its function is as follows. Alpha subunit of the heteropentameric ligand-gated chloride channel gated by gamma-aminobutyric acid (GABA), a major inhibitory neurotransmitter in the brain. GABA-gated chloride channels, also named GABA(A) receptors (GABAAR), consist of five subunits arranged around a central pore and contain GABA active binding site(s) located at the alpha and beta subunit interface(s). When activated by GABA, GABAARs selectively allow the flow of chloride anions across the cell membrane down their electrochemical gradient. GABAARs containing alpha-4 are predominantly extrasynaptic, contributing to tonic inhibition in dentate granule cells and thalamic relay neurons. Extrasynaptic alpha-4-containing GABAARs control levels of excitability and network activity. GABAAR containing alpha-4-beta-3-delta subunits can simultaneously bind GABA and histamine where histamine binds at the interface of two neighboring beta subunits, which may be involved in the regulation of sleep and wakefulness. This chain is Gamma-aminobutyric acid receptor subunit alpha-4, found in Homo sapiens (Human).